A 1645-amino-acid chain; its full sequence is Protein MON2 homolog (1645 aa).

It belongs to the MON2 family.

In terms of biological role, may be required for traffic between late Golgi and early endosomes. This Caenorhabditis briggsae protein is Protein MON2 homolog.